Here is a 429-residue protein sequence, read N- to C-terminus: Polypyrimidine tract-binding protein homolog 2 (429 aa).

S2 carries the post-translational modification N-acetylserine. RRM domains lie at 18 to 96 (KVLH…YSNR), 110 to 197 (GNVL…YSAH), and 243 to 323 (SNVL…YSRH). Residues 331 to 429 (NNDRSRDYTM…QHYGGPGPMH (99 aa)) form a disordered region. A compositionally biased stretch (low complexity) spans 367-381 (GGSHHQQQQQPQGGW). Gly residues predominate over residues 382–397 (VQPGGQGSMGMGGGGH).

The protein resides in the nucleus. Functionally, plays a role in pre-mRNA splicing. Binds to the polypyrimidine tract of introns. May promote the binding of U2 snRNP to pre-mRNA. This Arabidopsis thaliana (Mouse-ear cress) protein is Polypyrimidine tract-binding protein homolog 2.